We begin with the raw amino-acid sequence, 220 residues long: Putative vesicle-associated membrane protein 726 (220 aa).

Topologically, residues 1–196 (MGQQSLIYSF…LWFENMKIKL (196 aa)) are cytoplasmic. A Longin domain is found at 10–114 (FVARGTVILA…SLNKEFGSKL (105 aa)). Residues 130-190 (KLSKVKAQVT…TKMKRKLWFE (61 aa)) enclose the v-SNARE coiled-coil homology domain. The chain crosses the membrane as a helical; Anchor for type IV membrane protein span at residues 197–217 (IVFGIIVALILIIILSVCHGF). Topologically, residues 218 to 220 (KCT) are vesicular.

This sequence belongs to the synaptobrevin family. In terms of tissue distribution, expressed in flowers, leaves, stems and roots.

Its subcellular location is the cell membrane. It localises to the early endosome membrane. Its function is as follows. Involved in the targeting and/or fusion of transport vesicles to their target membrane. The chain is Putative vesicle-associated membrane protein 726 (VAMP726) from Arabidopsis thaliana (Mouse-ear cress).